Reading from the N-terminus, the 101-residue chain is Protein snet-1 (101 aa).

Positions 1-20 (MARFTPLLMILLALVPLYYS) are cleaved as a signal peptide.

May be degraded by the nep-2 peptidase. As to expression, expressed in coelomocytes, the ASK sensory neurons and interneurons AIB, AIM and PVQ.

The protein localises to the secreted. It is found in the perikaryon. Functionally, negatively regulates chemotaxis and olfactory plasticity which is the change from positive chemotaxis to dispersal after prolonged exposure to an odorant. May be down-regulated in response to pheromone exposure, resulting in promotion of olfactory plasticity. The sequence is that of Protein snet-1 from Caenorhabditis elegans.